A 160-amino-acid chain; its full sequence is Putative pre-16S rRNA nuclease (160 aa).

It belongs to the YqgF nuclease family.

The protein localises to the cytoplasm. Could be a nuclease involved in processing of the 5'-end of pre-16S rRNA. The protein is Putative pre-16S rRNA nuclease of Cereibacter sphaeroides (strain ATCC 17025 / ATH 2.4.3) (Rhodobacter sphaeroides).